A 381-amino-acid polypeptide reads, in one-letter code: Succinyl-diaminopimelate desuccinylase (381 aa).

Residue His-72 participates in Zn(2+) binding. Asp-74 is a catalytic residue. Residue Asp-105 participates in Zn(2+) binding. Glu-139 acts as the Proton acceptor in catalysis. 3 residues coordinate Zn(2+): Glu-140, Glu-168, and His-354.

This sequence belongs to the peptidase M20A family. DapE subfamily. Homodimer. The cofactor is Zn(2+). Co(2+) serves as cofactor.

The enzyme catalyses N-succinyl-(2S,6S)-2,6-diaminopimelate + H2O = (2S,6S)-2,6-diaminopimelate + succinate. The protein operates within amino-acid biosynthesis; L-lysine biosynthesis via DAP pathway; LL-2,6-diaminopimelate from (S)-tetrahydrodipicolinate (succinylase route): step 3/3. Its function is as follows. Catalyzes the hydrolysis of N-succinyl-L,L-diaminopimelic acid (SDAP), forming succinate and LL-2,6-diaminopimelate (DAP), an intermediate involved in the bacterial biosynthesis of lysine and meso-diaminopimelic acid, an essential component of bacterial cell walls. The polypeptide is Succinyl-diaminopimelate desuccinylase (Shewanella sp. (strain MR-4)).